Consider the following 379-residue polypeptide: Alcohol dehydrogenase 2 (379 aa).

8 residues coordinate Zn(2+): Cys47, Thr49, His69, Cys99, Cys102, Cys105, Cys113, and Cys177. 2 residues coordinate an alcohol: Thr49 and His69. Thr49 provides a ligand contact to NAD(+). Residues 202-207, Asp226, Lys231, Thr272, Val295, 295-297, Phe322, and Arg372 contribute to the NAD(+) site; these read GLGAVG and VGV.

It belongs to the zinc-containing alcohol dehydrogenase family. As to quaternary structure, homodimer. It depends on Zn(2+) as a cofactor.

The protein localises to the cytoplasm. It catalyses the reaction a primary alcohol + NAD(+) = an aldehyde + NADH + H(+). The catalysed reaction is a secondary alcohol + NAD(+) = a ketone + NADH + H(+). This Oryza sativa subsp. indica (Rice) protein is Alcohol dehydrogenase 2 (ADH2).